The chain runs to 134 residues: Large ribosomal subunit protein uL18 (134 aa).

A disordered region spans residues 1-25; that stretch reads MSNTAQNEKRLPVGKDISTRRRTAR. Residues 7–19 show a composition bias toward basic and acidic residues; the sequence is NEKRLPVGKDIST.

It belongs to the universal ribosomal protein uL18 family. Part of the 50S ribosomal subunit; part of the 5S rRNA/L5/L18/L25 subcomplex. Contacts the 5S and 23S rRNAs.

In terms of biological role, this is one of the proteins that bind and probably mediate the attachment of the 5S RNA into the large ribosomal subunit, where it forms part of the central protuberance. In Corynebacterium jeikeium (strain K411), this protein is Large ribosomal subunit protein uL18.